The following is an 835-amino-acid chain: Outer membrane usher protein FasD (835 aa).

Positions 1–21 (MNKYPPLLTMLIIGIGSNAVA) are cleaved as a signal peptide. An intrachain disulfide couples Cys810 to Cys834.

This sequence belongs to the fimbrial export usher family.

It localises to the cell outer membrane. In terms of biological role, involved in the export and assembly of the 987P fimbriae subunits across the outer membrane. In Escherichia coli, this protein is Outer membrane usher protein FasD (fasD).